A 126-amino-acid polypeptide reads, in one-letter code: Methylglyoxal synthase (126 aa).

The 126-residue stretch at 1 to 126 folds into the MGS-like domain; that stretch reads MEKKIALIAH…LIKGFEGLNT (126 aa). Substrate-binding positions include H10, K14, 36-39, and 56-57; these read TGTT and SG. D62 acts as the Proton donor/acceptor in catalysis. H89 contacts substrate.

This sequence belongs to the methylglyoxal synthase family.

The enzyme catalyses dihydroxyacetone phosphate = methylglyoxal + phosphate. Catalyzes the formation of methylglyoxal from dihydroxyacetone phosphate. The sequence is that of Methylglyoxal synthase from Borrelia garinii subsp. bavariensis (strain ATCC BAA-2496 / DSM 23469 / PBi) (Borreliella bavariensis).